A 386-amino-acid polypeptide reads, in one-letter code: Formate-dependent phosphoribosylglycinamide formyltransferase (386 aa).

N(1)-(5-phospho-beta-D-ribosyl)glycinamide is bound by residues 10–11 (EL) and E70. Residues R102, K143, 148-153 (SSGKGQ), 183-186 (EAFV), and E191 each bind ATP. The ATP-grasp domain maps to 107-298 (DLAAKELGLK…EFELHLRAIL (192 aa)). Positions 256 and 268 each coordinate Mg(2+). N(1)-(5-phospho-beta-D-ribosyl)glycinamide-binding positions include D275, K346, and 353–354 (RR).

It belongs to the PurK/PurT family. As to quaternary structure, homodimer.

The catalysed reaction is N(1)-(5-phospho-beta-D-ribosyl)glycinamide + formate + ATP = N(2)-formyl-N(1)-(5-phospho-beta-D-ribosyl)glycinamide + ADP + phosphate + H(+). Its pathway is purine metabolism; IMP biosynthesis via de novo pathway; N(2)-formyl-N(1)-(5-phospho-D-ribosyl)glycinamide from N(1)-(5-phospho-D-ribosyl)glycinamide (formate route): step 1/1. Its function is as follows. Involved in the de novo purine biosynthesis. Catalyzes the transfer of formate to 5-phospho-ribosyl-glycinamide (GAR), producing 5-phospho-ribosyl-N-formylglycinamide (FGAR). Formate is provided by PurU via hydrolysis of 10-formyl-tetrahydrofolate. The protein is Formate-dependent phosphoribosylglycinamide formyltransferase of Flavobacterium psychrophilum (strain ATCC 49511 / DSM 21280 / CIP 103535 / JIP02/86).